Here is a 783-residue protein sequence, read N- to C-terminus: Transcription factor E4F1 (783 aa).

The tract at residues 40 to 84 (GFLGLPAPFSEEDEDDVHRCGRCQVEFTALEDFVQHKIQKTCHRA) is required for ubiquitin ligase activity. At Ser49 the chain carries Phosphoserine. The mediates dimerization, DNA-binding, transcription repression of CCNA2 and interaction with HMGA2 stretch occupies residues 185-264 (LLVNKEGRYV…GKSFRESGAL (80 aa)). 2 C2H2-type zinc fingers span residues 193 to 215 (YVCM…MVTH) and 221 to 243 (HECK…HRRH). The segment at 249–273 (YKCAKCGKSFRESGALTRHLKSLTP) adopts a C2H2-type 3; degenerate zinc-finger fold. The mediates interaction with CDKN2A stretch occupies residues 368–565 (NLLHQAMQNS…REKGSLVRHV (198 aa)). The tract at residues 386–407 (GEESALEPAPPSGSSPQCLGDG) is disordered. C2H2-type zinc fingers lie at residues 434–456 (HPCP…KRGH), 462–484 (FTCT…QEVH), 490–512 (FRCG…RRVH), 518–540 (FPCP…FRTH), and 546–568 (HVCQ…VRHH). The interval 434–598 (HPCPQCSETF…LNRHLRTKGG (165 aa)) is interaction with BMI1. A mediates interaction with TP53 region spans residues 520–579 (CPQCGKRYKTKNAQQVHFRTHLEEKPHVCQFCSRGFREKGSLVRHVRHHTGEKPFKCYKC). The C2H2-type 9; degenerate zinc finger occupies 574 to 596 (FKCYKCGRGFAEHGTLNRHLRTK). Residues 574–596 (FKCYKCGRGFAEHGTLNRHLRTK) form a mediates interaction with RASSF1 region.

Homodimer; binds DNA as a dimer. Forms a complex with CDKN2A and TP53. Interacts with HDAC1, HMGA2 and RASSF1. Interactions with TP53, RB1, ANP32A and probably BMI1 and FHL2 regulate E4F1 activity. Post-translationally, phosphorylated; phosphorylation is cell cycle-dependent and regulates DNA-binding activity and function. In terms of processing, may be sumoylated by UBE2I upon interaction with CDKN2A. In terms of tissue distribution, ubiquitously expressed.

Its subcellular location is the nucleus. The protein localises to the nucleoplasm. It is found in the cytoplasm. It catalyses the reaction S-ubiquitinyl-[E2 ubiquitin-conjugating enzyme]-L-cysteine + [acceptor protein]-L-lysine = [E2 ubiquitin-conjugating enzyme]-L-cysteine + N(6)-ubiquitinyl-[acceptor protein]-L-lysine.. The protein operates within protein modification; protein ubiquitination. Functionally, may function as a transcriptional repressor. May also function as a ubiquitin ligase mediating ubiquitination of chromatin-associated TP53. Functions in cell survival and proliferation through control of the cell cycle. Functions in the p53 and pRB tumor suppressor pathways and regulates the cyclin CCNA2 transcription. The sequence is that of Transcription factor E4F1 (E4f1) from Mus musculus (Mouse).